We begin with the raw amino-acid sequence, 536 residues long: Caspase recruitment domain-containing protein 9 (536 aa).

At Ser-2 the chain carries Phosphoserine. Residues Asp-3, Cys-10, and His-73 each contribute to the Zn(2+) site. Residues Asn-6–Glu-98 enclose the CARD domain. Residues Pro-99–Thr-116 form a linker region. 2 coiled-coil regions span residues Gln-117–Ser-277 and Leu-332–Glu-419. Lys-125 participates in a covalent cross-link: Glycyl lysine isopeptide (Lys-Gly) (interchain with G-Cter in ubiquitin). Thr-231 bears the Phosphothreonine mark. Ser-277 carries the phosphoserine modification. A phosphoserine mark is found at Ser-424, Ser-425, Ser-431, Ser-450, Ser-460, Ser-483, and Ser-498. The interval Leu-427 to Ser-536 is disordered. A compositionally biased stretch (basic and acidic residues) spans Pro-487–Tyr-502. Residues Arg-503–Lys-513 show a composition bias toward basic residues. Thr-531 and Thr-533 each carry phosphothreonine; by CK2.

As to quaternary structure, monomer. Homodimer; homodimerization is mediated by the CARD domain which forms an extensive interaction with the adjacent linker and coiled-coil regions; leads to an autoinhibited state. Homomultimer; polymerizes following activation, forming a nucleating helical template that seeds BCL10-filament formation via a CARD-CARD interaction. Interacts (via CARD domain) with BCL10 (via CARD domain); interaction takes place following CARD9 activation and polymerization, leading to the formation of a filamentous CBM complex assembly. Component of a CBM complex (CARD9-BCL10, MALT1), composed of CARD9, BCL10 and MALT1. Interacts with RASGRF1. Interacts with NOD2 (via NACHT domain); interaction is direct. Interacts with RIPK2. Interacts with VHL; without leading to protein degradation. Post-translationally, phosphorylated at Thr-231 by PRKCD downstream of C-type lectin receptors activation: phosphorylation promotes interaction with BCL10, followed by activation of NF-kappa-B and MAP kinase p38 pathways. Phosphorylated at Thr-531 and Thr-533 by CK2 following interaction with VHL, leading to inhibit the ability to activate NF-kappa-B. In terms of processing, ubiquitinated at Lys-125 via 'Lys-27'-linked ubiquitin by TRIM62 downstream of C-type lectin receptors activation; leading to CARD9 activation, followed by activation of NF-kappa-B and MAP kinase p38 pathways. Deubiquitinated at Lys-125 by USP15, inhibiting CARD9. In terms of tissue distribution, expression is restricted to several populations of phagocytes, such as macrophages, monocytes, and dendritic cells. Highly expressed in spleen. Also detected in liver, placenta, lung, peripheral blood leukocytes and in brain.

Its subcellular location is the cytoplasm. Maintained in an autoinhibited state via homodimerization in which the CARD domain forms an extensive interaction with the adjacent linker and coiled-coil regions. Activation downstream of C-type lectin receptors, by phosphorylation by PRKCD and/or ubiquitination by TRIM62, triggers disruption of the CARD domain-coiled coil interface, CARD9 homooligomerization and BCL10 recruitment, followed by activation of NF-kappa-B and MAP kinase p38 pathways. Zinc-binding inhibits activation by stabilizing the CARD ground-state conformation and restricting its capacity to form BCL10-nucleating filaments. Functionally, adapter protein that plays a key role in innate immune response against fungi by forming signaling complexes downstream of C-type lectin receptors. CARD9-mediated signals are essential for antifungal immunity against a subset of fungi from the phylum Ascomycota. Transduces signals in myeloid cells downstream of C-type lectin receptors CLEC7A (dectin-1), CLEC6A (dectin-2) and CLEC4E (Mincle), which detect pathogen-associated molecular pattern metabolites (PAMPs), such as fungal carbohydrates, and trigger CARD9 activation. Upon activation, CARD9 homooligomerizes to form a nucleating helical template that recruits BCL10 via CARD-CARD interaction, thereby promoting polymerization of BCL10 and subsequent recruitment of MALT1: this leads to activation of NF-kappa-B and MAP kinase p38 (MAPK11, MAPK12, MAPK13 and/or MAPK14) pathways which stimulate expression of genes encoding pro-inflammatory cytokines and chemokines. CARD9 signaling in antigen-presenting cells links innate sensing of fungi to the activation of adaptive immunity and provides a cytokine milieu that induces the development and subsequent of interleukin 17-producing T helper (Th17) cells. Also involved in activation of myeloid cells via classical ITAM-associated receptors and TLR: required for TLR-mediated activation of MAPK, while it is not required for TLR-induced activation of NF-kappa-B. CARD9 can also be engaged independently of BCL10: forms a complex with RASGRF1 downstream of C-type lectin receptors, which recruits and activates HRAS, leading to ERK activation and the production of cytokines. Acts as an important regulator of the intestinal commensal fungi (mycobiota) component of the gut microbiota. Plays an essential role in antifungal immunity against dissemination of gut fungi: acts by promoting induction of antifungal IgG antibodies response in CX3CR1(+) macrophages to confer protection against disseminated C.albicans or C.auris infection. Also mediates immunity against other pathogens, such as certain bacteria, viruses and parasites; CARD9 signaling is however redundant with other innate immune responses. In response to L.monocytogenes infection, required for the production of inflammatory cytokines activated by intracellular peptidoglycan: acts by connecting NOD2 recognition of peptidoglycan to downstream activation of MAP kinases (MAPK) without activating NF-kappa-B. This chain is Caspase recruitment domain-containing protein 9, found in Homo sapiens (Human).